The primary structure comprises 66 residues: UPF0370 protein YpfN (66 aa).

A helical transmembrane segment spans residues 4–24; sequence LAKYWWILVLVFLVGVLLNVI. Residues 39 to 66 form a disordered region; it reads KPELPPHRDFNDKWDDEDGWPKKDQPKK. The segment covering 42–66 has biased composition (basic and acidic residues); sequence LPPHRDFNDKWDDEDGWPKKDQPKK.

It belongs to the UPF0370 family.

It is found in the cell membrane. The protein is UPF0370 protein YpfN of Salmonella paratyphi B (strain ATCC BAA-1250 / SPB7).